Consider the following 189-residue polypeptide: uncharacterized protein (189 aa).

The stretch at 31–54 (KCENIDDLANRYEVSKQEVEKVFK) forms a coiled coil. 4 EF-hand domains span residues 47-82 (QEVE…LGID), 83-118 (VSPK…KIKL), 120-155 (TVKA…TVST), and 157-189 (ITVK…CQTV). Aspartate 60, aspartate 62, serine 64, threonine 66, glutamate 71, aspartate 96, serine 98, aspartate 100, glutamine 102, glutamate 107, aspartate 133, asparagine 135, glutamate 137, and glutamate 144 together coordinate Ca(2+).

This is an uncharacterized protein from Caenorhabditis elegans.